We begin with the raw amino-acid sequence, 205 residues long: MIALVDYGGGNLKSVANAIHALGYEFKLTSSPEEILSAEAVILPGVGAAADTMAGLQSKGLDKAIKELVARDIPLLAICVGMQVLFDYTAEGDNTKCLGILKGDVKRLPEGLKIPQMGWNQLKQRVSHPIFEGIPDGIDFYFVHSYYASPADPGIIGATTDYGVDFCSLVISKRLIATQFHPEKSGSYGLKLYQNFFKMALGDKK.

In terms of domain architecture, Glutamine amidotransferase type-1 spans 1 to 205 (MIALVDYGGG…FFKMALGDKK (205 aa)). Cysteine 79 functions as the Nucleophile in the catalytic mechanism. Catalysis depends on residues histidine 181 and glutamate 183.

Heterodimer of HisH and HisF.

It is found in the cytoplasm. It catalyses the reaction 5-[(5-phospho-1-deoxy-D-ribulos-1-ylimino)methylamino]-1-(5-phospho-beta-D-ribosyl)imidazole-4-carboxamide + L-glutamine = D-erythro-1-(imidazol-4-yl)glycerol 3-phosphate + 5-amino-1-(5-phospho-beta-D-ribosyl)imidazole-4-carboxamide + L-glutamate + H(+). The enzyme catalyses L-glutamine + H2O = L-glutamate + NH4(+). It participates in amino-acid biosynthesis; L-histidine biosynthesis; L-histidine from 5-phospho-alpha-D-ribose 1-diphosphate: step 5/9. Its function is as follows. IGPS catalyzes the conversion of PRFAR and glutamine to IGP, AICAR and glutamate. The HisH subunit catalyzes the hydrolysis of glutamine to glutamate and ammonia as part of the synthesis of IGP and AICAR. The resulting ammonia molecule is channeled to the active site of HisF. The protein is Imidazole glycerol phosphate synthase subunit HisH of Dehalococcoides mccartyi (strain ATCC BAA-2266 / KCTC 15142 / 195) (Dehalococcoides ethenogenes (strain 195)).